A 712-amino-acid chain; its full sequence is Ribosomal RNA large subunit methyltransferase K/L (712 aa).

In terms of domain architecture, THUMP spans 46-157 (GAYQALLHSR…RENMVVSLDL (112 aa)).

The protein belongs to the methyltransferase superfamily. RlmKL family.

The protein resides in the cytoplasm. The catalysed reaction is guanosine(2445) in 23S rRNA + S-adenosyl-L-methionine = N(2)-methylguanosine(2445) in 23S rRNA + S-adenosyl-L-homocysteine + H(+). It carries out the reaction guanosine(2069) in 23S rRNA + S-adenosyl-L-methionine = N(2)-methylguanosine(2069) in 23S rRNA + S-adenosyl-L-homocysteine + H(+). Specifically methylates the guanine in position 2445 (m2G2445) and the guanine in position 2069 (m7G2069) of 23S rRNA. This chain is Ribosomal RNA large subunit methyltransferase K/L, found in Actinobacillus pleuropneumoniae serotype 5b (strain L20).